Consider the following 504-residue polypeptide: Cytochrome P450 3A2 (504 aa).

Heme is bound at residue cysteine 443.

It belongs to the cytochrome P450 family. It depends on heme as a cofactor. As to expression, expressed in liver.

The protein localises to the endoplasmic reticulum membrane. The protein resides in the microsome membrane. The catalysed reaction is an organic molecule + reduced [NADPH--hemoprotein reductase] + O2 = an alcohol + oxidized [NADPH--hemoprotein reductase] + H2O + H(+). Functionally, cytochromes P450 are a group of heme-thiolate monooxygenases. In liver microsomes, this enzyme is involved in an NADPH-dependent electron transport pathway. It oxidizes a variety of structurally unrelated compounds, including steroids, fatty acids, and xenobiotics. The polypeptide is Cytochrome P450 3A2 (Cyp3a2) (Rattus norvegicus (Rat)).